Here is a 294-residue protein sequence, read N- to C-terminus: Complement C1q tumor necrosis factor-related protein 2 (294 aa).

Positions 1-24 (MTIFKKVTTMISWVLLACALPCAA) are cleaved as a signal peptide. Residues 42 to 156 (QLVCSLPGPQ…PGPCSCGSSR (115 aa)) form a disordered region. The 103-residue stretch at 48 to 150 (PGPQGPPGPP…KGEPGLPGPC (103 aa)) folds into the Collagen-like domain. A compositionally biased stretch (pro residues) spans 50-59 (PQGPPGPPGA). Over residues 75-87 (DGQDGQDGDRGDS) the composition is skewed to basic and acidic residues. Residues 105–129 (KGKAGAIGRAGPRGPKGVSGTPGKH) show a composition bias toward low complexity. The C1q domain maps to 154–290 (SSRAKSAFSV…GFLIYADQGD (137 aa)).

In terms of assembly, may interact with ERFE.

Its subcellular location is the secreted. Functionally, involved in the regulation of lipid metabolism in adipose tissue and liver. The protein is Complement C1q tumor necrosis factor-related protein 2 (C1qtnf2) of Mus musculus (Mouse).